The primary structure comprises 482 residues: Rhamnulokinase (482 aa).

13 to 17 is a binding site for ATP; that stretch reads ASSGR. Residues G83 and 232-234 contribute to the substrate site; that span reads HDT. Catalysis depends on D233, which acts as the Proton acceptor. T255 contacts ATP. A substrate-binding site is contributed by N292. Residue N300 participates in ATP binding. Cysteines 349 and 366 form a disulfide. G398 provides a ligand contact to ATP. C409 and C413 are oxidised to a cystine.

This sequence belongs to the rhamnulokinase family. Mg(2+) is required as a cofactor.

The catalysed reaction is L-rhamnulose + ATP = L-rhamnulose 1-phosphate + ADP + H(+). Its pathway is carbohydrate degradation; L-rhamnose degradation; glycerone phosphate from L-rhamnose: step 2/3. In terms of biological role, involved in the catabolism of L-rhamnose (6-deoxy-L-mannose). Catalyzes the transfer of the gamma-phosphate group from ATP to the 1-hydroxyl group of L-rhamnulose to yield L-rhamnulose 1-phosphate. The protein is Rhamnulokinase of Mannheimia succiniciproducens (strain KCTC 0769BP / MBEL55E).